The chain runs to 396 residues: Metallophosphoesterase 1 (396 aa).

The helical transmembrane segment at 27-47 (IAVVFAVLLFCEFLIYYLAIF) threads the bilayer. Residues Asp77, Asp119, Asn157, His249, His303, and His305 each coordinate a divalent metal cation. The helical transmembrane segment at 356–376 (VVLVIYCGAVGFLVVLTLSHL) threads the bilayer. The Di-lysine motif motif lies at 392-396 (KRKTR).

This sequence belongs to the metallophosphoesterase superfamily. MPPE1 family. In terms of assembly, interacts with GPI-anchor proteins (via the GPI portion). Interacts with TMED10. It depends on Mn(2+) as a cofactor.

It localises to the endoplasmic reticulum-Golgi intermediate compartment membrane. Functionally, metallophosphoesterase that catalyzes the removal of a side-chain ethanolamine-phosphate (EtNP) from the second mannose of the GPI-anchor protein intermediate. Participates in the glycan remodeling steps of GPI-anchor maturation to allow an efficient transport of GPI-anchor proteins from the endoplasmic reticulum to the Golgi. The sequence is that of Metallophosphoesterase 1 from Macaca fascicularis (Crab-eating macaque).